Reading from the N-terminus, the 442-residue chain is MFEKISQFLVPIAGRLNNNRYLQVLRDAFMLAFPLTIFGSIFVVLTNLPFLNKIMNASMLTSFQSHFGIASTATMGIMSVFVVFGIGYYLSKSYQVEAVFGGAIALVSFLLLTPFIIQPETGDAITGVIPVDRLGAKGMFLGMITAFLSGEIYRRIVQKNLTIKMPAGVPPAVAKSFAALIPAFITLTVFLLINVMVTLFFKTNMHDVIYHAIQAPLVGLGSGIIPTLIAVFFIQILWFFGLHGQIIINSVMDPIWNTLQVENLSAYTAGKEIPHIISKPFMEIYTVGMGGTGMTLAIVFTILIFMKSRQMKQVSKLGLAPGIFNVNEPIIFGLPIVMNPIIIVPWVLAPMVVTLVTYLAMSAGLVPPPTGVTVPWTVPLFINGIMATNSIMGGVMQLINLLIVFVIWFPFLKAMDKLNLAKEKEQAVQETAAQQNDNSIKM.

The region spanning 5-411 (ISQFLVPIAG…LIVFVIWFPF (407 aa)) is the PTS EIIC type-3 domain. Helical transmembrane passes span 28–48 (AFML…LTNL), 67–87 (FGIA…FGIG), 97–117 (EAVF…PFII), 138–157 (GMFL…RRIV), 177–197 (FAAL…NVMV), 205–225 (MHDV…SGII), 228–248 (LIAV…QIII), 286–306 (TVGM…LIFM), 329–349 (PIIF…WVLA), 365–385 (LVPP…INGI), and 391–411 (IMGG…WFPF).

The protein localises to the cell membrane. In terms of biological role, the phosphoenolpyruvate-dependent sugar phosphotransferase system (sugar PTS), a major carbohydrate active transport system, catalyzes the phosphorylation of incoming sugar substrates concomitantly with their translocation across the cell membrane. The enzyme II GmuABC PTS system is involved in the transport of oligo-glucomannans such as cellobiose or mannobiose. This chain is PTS system oligo-beta-mannoside-specific EIIC component, found in Bacillus subtilis (strain 168).